Here is a 615-residue protein sequence, read N- to C-terminus: Translation initiation factor IF-2 (615 aa).

The 168-residue stretch at 118–285 (KRPPIVTVMG…AILTLAEINE (168 aa)) folds into the tr-type G domain. The interval 127 to 134 (GHVDHGKT) is G1. Residue 127-134 (GHVDHGKT) coordinates GTP. The tract at residues 152 to 156 (GITQH) is G2. The G3 stretch occupies residues 173–176 (DTPG). GTP contacts are provided by residues 173 to 177 (DTPGH) and 227 to 230 (NKMD). The G4 stretch occupies residues 227 to 230 (NKMD). The tract at residues 263–265 (SAI) is G5.

Belongs to the TRAFAC class translation factor GTPase superfamily. Classic translation factor GTPase family. IF-2 subfamily.

The protein resides in the cytoplasm. Its function is as follows. One of the essential components for the initiation of protein synthesis. Protects formylmethionyl-tRNA from spontaneous hydrolysis and promotes its binding to the 30S ribosomal subunits. Also involved in the hydrolysis of GTP during the formation of the 70S ribosomal complex. In Mycoplasmoides gallisepticum (strain R(low / passage 15 / clone 2)) (Mycoplasma gallisepticum), this protein is Translation initiation factor IF-2.